We begin with the raw amino-acid sequence, 224 residues long: UPF0758 protein PSPA7_6095 (224 aa).

The region spanning 102–224 (VLESPQAVRD…PLSLAEYGWM (123 aa)) is the MPN domain. Residues H173, H175, and D186 each contribute to the Zn(2+) site. The short motif at 173–186 (HNHPSGDARPSLAD) is the JAMM motif element.

The protein belongs to the UPF0758 family.

This chain is UPF0758 protein PSPA7_6095, found in Pseudomonas paraeruginosa (strain DSM 24068 / PA7) (Pseudomonas aeruginosa (strain PA7)).